Consider the following 243-residue polypeptide: 7-cyano-7-deazaguanine synthase (243 aa).

Residue 18–28 (FSGGQDSATCL) coordinates ATP. The Zn(2+) site is built by Cys206, Cys221, Cys224, and Cys227.

This sequence belongs to the QueC family. It depends on Zn(2+) as a cofactor.

It carries out the reaction 7-carboxy-7-deazaguanine + NH4(+) + ATP = 7-cyano-7-deazaguanine + ADP + phosphate + H2O + H(+). Its pathway is purine metabolism; 7-cyano-7-deazaguanine biosynthesis. Its function is as follows. Catalyzes the ATP-dependent conversion of 7-carboxy-7-deazaguanine (CDG) to 7-cyano-7-deazaguanine (preQ(0)). The chain is 7-cyano-7-deazaguanine synthase from Methylorubrum extorquens (strain PA1) (Methylobacterium extorquens).